The following is a 367-amino-acid chain: Methylthioribose-1-phosphate isomerase (367 aa).

Residue aspartate 250 is the Proton donor of the active site.

It belongs to the eIF-2B alpha/beta/delta subunits family. MtnA subfamily.

The protein resides in the cytoplasm. It is found in the nucleus. It catalyses the reaction 5-(methylsulfanyl)-alpha-D-ribose 1-phosphate = 5-(methylsulfanyl)-D-ribulose 1-phosphate. The protein operates within amino-acid biosynthesis; L-methionine biosynthesis via salvage pathway; L-methionine from S-methyl-5-thio-alpha-D-ribose 1-phosphate: step 1/6. Its function is as follows. Catalyzes the interconversion of methylthioribose-1-phosphate (MTR-1-P) into methylthioribulose-1-phosphate (MTRu-1-P). The polypeptide is Methylthioribose-1-phosphate isomerase (IDI2) (Hordeum vulgare (Barley)).